A 122-amino-acid chain; its full sequence is Fluoride-specific ion channel FluC (122 aa).

Transmembrane regions (helical) follow at residues 4–24, 33–53, 66–86, and 95–115; these read LAVL…SIFI, LGTM…SIYL, LLIT…LEGI, and LKAF…VALG. Na(+) contacts are provided by G73 and T76.

This sequence belongs to the fluoride channel Fluc/FEX (TC 1.A.43) family.

The protein localises to the cell inner membrane. The catalysed reaction is fluoride(in) = fluoride(out). Na(+) is not transported, but it plays an essential structural role and its presence is essential for fluoride channel function. Fluoride-specific ion channel. Important for reducing fluoride concentration in the cell, thus reducing its toxicity. This Hydrogenobaculum sp. (strain Y04AAS1) protein is Fluoride-specific ion channel FluC.